The primary structure comprises 417 residues: Inactive cytochrome P450 76AD1 (417 aa).

A helical transmembrane segment spans residues 4 to 24 (ATLAMILAIWFISFHFIKLLF).

It belongs to the cytochrome P450 family.

Its subcellular location is the membrane. It participates in pigment biosynthesis; betalain biosynthesis. Inactive cytochrome unable to convert L-DOPA to cyclo-DOPA in the betalain pathway and producing a yellow mutant phenotype. A frameshift replaces 108 amino acids of the active protein found in red beets (AC I3PFJ5) with 27 new residues followed by a stop codon. The sequence is that of Inactive cytochrome P450 76AD1 from Beta vulgaris (Sugar beet).